The sequence spans 507 residues: Eukaryotic translation initiation factor 4E-binding protein Mextli homolog (507 aa).

Residues 126–163 (RPEGQHDPAPTVGIPPSATSPPTQVTSSVTSPVPSSPQ) form a disordered region. Residues 140–158 (PPSATSPPTQVTSSVTSPV) show a composition bias toward low complexity. The region spanning 242 to 307 (QLRHEMIIRN…EDIERAKDMI (66 aa)) is the KH domain. Disordered regions lie at residues 314 to 360 (NMSP…DEDI) and 395 to 424 (ARPSAEEREKKKERRKSMPLQQTARDQQEP). Polar residues predominate over residues 329–348 (QYSGMSSENQSIPSQQNTAN). Residues 349 to 360 (IDEDDDDDDEDI) are compositionally biased toward acidic residues.

Interacts with eukaryotic translation initiation factor ife-3.

It is found in the cytoplasm. Its function is as follows. Plays a role in promoting translation. This chain is Eukaryotic translation initiation factor 4E-binding protein Mextli homolog, found in Caenorhabditis elegans.